The primary structure comprises 87 residues: UPF0250 protein PC1_1177 (87 aa).

Belongs to the UPF0250 family.

This is UPF0250 protein PC1_1177 from Pectobacterium carotovorum subsp. carotovorum (strain PC1).